The following is a 446-amino-acid chain: MAHVITRINAREILDSRGNPTVEVDLETNLGIFRAAVPSGASTGIYEALELRDNDKSRYLGKGVQKAIKNINEIIAPKLIGMNCTEQKKIDNLMVEELDGSKNEWGWSKSKLGANAILAISMAVCRAGAAANKVSLYKYLAQLAGKKSDQMVLPVPCLNVINGGSHAGNKLSFQEFMIVPVGAPSFKEALRYGAEVYHTLKSEIKKKYGIDATNVGDEGGFAPNILNANEALDLLVTAIKSAGYEGKVKIAMDVAASEFYNSENKTYDLDFKTPNNDKSLVKTGAQLVDLYIDLVKKYPIVSIEDPFDQDDWENYAKLTAAIGKDVQIVGDDLLVTNPTRITKALEKNACNALPLKVNQIGSITEAIEACLLSQKNNWGVMVSHRSGETEDVFIADLVVALRTGQIKTGAPCRSERNAKYNQLLRIEESLGNNAVFAGEKFRLQLN.

A Mg(2+)-binding site is contributed by Ser42. Ser42 carries the phosphoserine modification. A Pentapeptide insert motif is present at residues 104–108 (EWGWS). Lys133 is modified (N6-acetyllysine). Lys138 participates in a covalent cross-link: Glycyl lysine isopeptide (Lys-Gly) (interchain with G-Cter in ubiquitin). The residue at position 139 (Tyr139) is a Phosphotyrosine. The substrate site is built by His166 and Glu175. The Proton donor role is filled by Glu218. Asp253 contacts Mg(2+). Positions 277–282 (DKSLVK) match the DKSLVK motif motif. Mg(2+)-binding residues include Glu304 and Asp331. Positions 304 and 331 each coordinate substrate. A Phosphothreonine modification is found at Thr339. Lys356 serves as the catalytic Proton acceptor. Lys375 carries the post-translational modification N6-acetyllysine. Residues 383–386 (SHRS) and Lys407 each bind substrate.

Belongs to the enolase family. In terms of assembly, homodimer. Forms a complex at least composed of DegP, ENO and HSP70. Interacts with G-actin. Interacts (via the DKSLVK motif) with mammalian host PLG/plasminogen (present in the mosquito blood meal); the interaction occurs at the ookinete cell surface and is required for ookinete invasion of the mosquito midgut. Interacts with A.gambiae EBP; depending on the Plasmodium species, the interaction is either involved in ookinete invasion of the mosquito midgut (P.berghei) or is dispensable (P.falciparum). Requires Mg(2+) as cofactor.

Its subcellular location is the cytoplasm. The protein resides in the nucleus. The protein localises to the cytoskeleton. It is found in the cell surface. It localises to the cell membrane. Its subcellular location is the vacuole. The catalysed reaction is (2R)-2-phosphoglycerate = phosphoenolpyruvate + H2O. The protein operates within carbohydrate degradation; glycolysis; pyruvate from D-glyceraldehyde 3-phosphate: step 4/5. Glycolytic enzyme that catalyzes the conversion of 2-phosphoglycerate to phosphoenolpyruvate. In addition to glycolysis, involved in various processes such as parasite development and invasion. Plays an essential role during ookinete invasion of the mosquito vector midgut by mediating the interaction of the ookinete with the midgut epithelium and, further, by binding to mammalian host plasminogen in the blood meal, whose conversion to active plasmin promotes the invasion process. This is Enolase from Plasmodium falciparum (isolate FCR-3 / Gambia).